A 633-amino-acid chain; its full sequence is Mitochondrial Rho GTPase 1 (633 aa).

The Miro 1 domain maps to 1 to 170 (MATVRICVCG…FFLCQKAVTH (170 aa)). Residues 1-603 (MATVRICVCG…PRSEEDVEGK (603 aa)) lie on the Cytoplasmic side of the membrane. Residues 10 to 17 (GDEGTGKS), 59 to 63 (DTSAL), and 115 to 118 (NKSD) each bind GTP. 2 EF-hand domains span residues 186–221 (AAVA…CFEK) and 306–341 (EGYR…TPGL). Residues aspartate 199, aspartate 201, aspartate 203, tyrosine 205, glutamate 210, aspartate 319, aspartate 321, aspartate 323, and glutamate 330 each contribute to the Ca(2+) site. A disordered region spans residues 398 to 418 (NPSTTAALKVTRPRKRRKRPG). Positions 408 to 418 (TRPRKRRKRPG) are enriched in basic residues. Positions 422 to 588 (RNVVLGHVLG…FVHIAEAAME (167 aa)) constitute a Miro 2 domain. Residues 431–438 (GPPGSGKS), 467–471 (ELPGG), and 537–540 (LKAD) each bind GTP. The helical; Anchor for type IV membrane protein transmembrane segment at 604–624 (WMAWGIALGAVVCAGAAAVMI) threads the bilayer. Over 625-633 (WRRVSGSGT) the chain is Mitochondrial intermembrane.

This sequence belongs to the mitochondrial Rho GTPase family.

It localises to the mitochondrion outer membrane. Its function is as follows. Mitochondrial GTPase involved in mitochondrial trafficking. Probably involved in control of anterograde transport of mitochondria and their subcellular distribution. In Aspergillus oryzae (strain ATCC 42149 / RIB 40) (Yellow koji mold), this protein is Mitochondrial Rho GTPase 1 (gem1).